The primary structure comprises 1434 residues: DNA-directed RNA polymerase subunit beta (1434 aa).

The protein belongs to the RNA polymerase beta chain family. In terms of assembly, the RNAP catalytic core consists of 2 alpha, 1 beta, 1 beta' and 1 omega subunit. When a sigma factor is associated with the core the holoenzyme is formed, which can initiate transcription.

It carries out the reaction RNA(n) + a ribonucleoside 5'-triphosphate = RNA(n+1) + diphosphate. In terms of biological role, DNA-dependent RNA polymerase catalyzes the transcription of DNA into RNA using the four ribonucleoside triphosphates as substrates. This is DNA-directed RNA polymerase subunit beta from Ureaplasma urealyticum serovar 10 (strain ATCC 33699 / Western).